The sequence spans 385 residues: Lipid-A-disaccharide synthase 2 (385 aa).

It belongs to the LpxB family.

It catalyses the reaction a lipid X + a UDP-2-N,3-O-bis[(3R)-3-hydroxyacyl]-alpha-D-glucosamine = a lipid A disaccharide + UDP + H(+). The protein operates within bacterial outer membrane biogenesis; LPS lipid A biosynthesis. Condensation of UDP-2,3-diacylglucosamine and 2,3-diacylglucosamine-1-phosphate to form lipid A disaccharide, a precursor of lipid A, a phosphorylated glycolipid that anchors the lipopolysaccharide to the outer membrane of the cell. This is Lipid-A-disaccharide synthase 2 from Legionella pneumophila (strain Lens).